A 274-amino-acid polypeptide reads, in one-letter code: Cytochrome b-c1 complex subunit Rieske, mitochondrial (274 aa).

Over 79–103 (SHTDIKVPDFSEYRRLEVLDSTKSS) the chain is Mitochondrial matrix. The chain crosses the membrane as a helical span at residues 104 to 140 (RESSEARKGFSYLVTGVTTVGVAYAAKNAVTQFVSSM). At 141–274 (SASADVLALA…FTSDDMVIVG (134 aa)) the chain is on the mitochondrial intermembrane side. One can recognise a Rieske domain in the interval 187–272 (EAAVELSQLR…YEFTSDDMVI (86 aa)). The [2Fe-2S] cluster site is built by cysteine 217, histidine 219, cysteine 236, histidine 239, and serine 241. Cysteine 222 and cysteine 238 are disulfide-bonded.

Belongs to the Rieske iron-sulfur protein family. Component of the ubiquinol-cytochrome c oxidoreductase (cytochrome b-c1 complex, complex III, CIII), a multisubunit enzyme composed of 11 subunits. The complex is composed of 3 respiratory subunits cytochrome b, cytochrome c1 and Rieske protein UQCRFS1, 2 core protein subunits UQCRC1/QCR1 and UQCRC2/QCR2, and 6 low-molecular weight protein subunits UQCRH/QCR6, UQCRB/QCR7, UQCRQ/QCR8, UQCR10/QCR9, UQCR11/QCR10 and subunit 9, the cleavage product of Rieske protein UQCRFS1. The complex exists as an obligatory dimer and forms supercomplexes (SCs) in the inner mitochondrial membrane with NADH-ubiquinone oxidoreductase (complex I, CI) and cytochrome c oxidase (complex IV, CIV), resulting in different assemblies (supercomplex SCI(1)III(2)IV(1) and megacomplex MCI(2)III(2)IV(2)). Incorporation of the Rieske protein UQCRFS1 is the penultimate step in complex III assembly. Interacts with TTC19, which is involved in the clearance of UQCRFS1 fragments. As to quaternary structure, component of the ubiquinol-cytochrome c oxidoreductase (cytochrome b-c1 complex, complex III, CIII). Subunit 9 corresponds to the mitochondrial targeting sequence (MTS) of Rieske protein UQCRFS1. It is retained after processing and incorporated inside complex III, where it remains bound to the complex and localizes between the 2 core subunits UQCRC1/QCR1 and UQCRC2/QCR2. It depends on [2Fe-2S] cluster as a cofactor. In terms of processing, proteolytic processing is necessary for the correct insertion of UQCRFS1 in the complex III dimer. Several fragments are generated during UQCRFS1 insertion, most probably due to the endogenous matrix-processing peptidase (MPP) activity of the 2 core protein subunits UQCRC1/QCR1 and UQCRC2/QCR2, which are homologous to the 2 mitochondrial-processing peptidase (MPP) subunits beta-MPP and alpha-MPP respectively. The action of the protease is also necessary for the clearance of the UQCRFS1 fragments.

Its subcellular location is the mitochondrion inner membrane. The enzyme catalyses a quinol + 2 Fe(III)-[cytochrome c](out) = a quinone + 2 Fe(II)-[cytochrome c](out) + 2 H(+)(out). Functionally, component of the ubiquinol-cytochrome c oxidoreductase, a multisubunit transmembrane complex that is part of the mitochondrial electron transport chain which drives oxidative phosphorylation. The respiratory chain contains 3 multisubunit complexes succinate dehydrogenase (complex II, CII), ubiquinol-cytochrome c oxidoreductase (cytochrome b-c1 complex, complex III, CIII) and cytochrome c oxidase (complex IV, CIV), that cooperate to transfer electrons derived from NADH and succinate to molecular oxygen, creating an electrochemical gradient over the inner membrane that drives transmembrane transport and the ATP synthase. The cytochrome b-c1 complex catalyzes electron transfer from ubiquinol to cytochrome c, linking this redox reaction to translocation of protons across the mitochondrial inner membrane, with protons being carried across the membrane as hydrogens on the quinol. In the process called Q cycle, 2 protons are consumed from the matrix, 4 protons are released into the intermembrane space and 2 electrons are passed to cytochrome c. The Rieske protein is a catalytic core subunit containing a [2Fe-2S] iron-sulfur cluster. It cycles between 2 conformational states during catalysis to transfer electrons from the quinol bound in the Q(0) site in cytochrome b to cytochrome c1. Incorporation of UQCRFS1 is the penultimate step in complex III assembly. Its function is as follows. Component of the ubiquinol-cytochrome c oxidoreductase (cytochrome b-c1 complex, complex III, CIII). UQCRFS1 undergoes proteolytic processing once it is incorporated in the complex III dimer. One of the fragments, called subunit 9, corresponds to its mitochondrial targeting sequence (MTS). The proteolytic processing is necessary for the correct insertion of UQCRFS1 in the complex III dimer, but the persistence of UQCRFS1-derived fragments may prevent newly imported UQCRFS1 to be processed and assembled into complex III and is detrimental for the complex III structure and function. This is Cytochrome b-c1 complex subunit Rieske, mitochondrial (UQCRFS1) from Gorilla gorilla gorilla (Western lowland gorilla).